Reading from the N-terminus, the 141-residue chain is Large ribosomal subunit protein uL14m (141 aa).

Residues 1 to 19 (MALSLSGLILPKLMQQRAF) constitute a mitochondrion transit peptide.

This sequence belongs to the universal ribosomal protein uL14 family. Component of the mitochondrial ribosome large subunit (39S) which comprises a 16S rRNA and about 50 distinct proteins. Interacts with MALSU1.

The protein resides in the mitochondrion. Functionally, may form part of 2 intersubunit bridges in the assembled ribosome. Upon binding to MALSU1, intersubunit bridge formation is blocked, preventing ribosome formation and repressing translation. In Danio rerio (Zebrafish), this protein is Large ribosomal subunit protein uL14m (mrpl14).